We begin with the raw amino-acid sequence, 1353 residues long: Adenylate cyclase type 9 (1353 aa).

Disordered stretches follow at residues 1–27 (MASSPHQQLLHHHSTEVSCDSSGDSNS) and 51–73 (SSSCSSSGDSGGLPRRVGGGGRL). The Cytoplasmic portion of the chain corresponds to 1 to 117 (MASSPHQQLL…CFPQTQRRFR (117 aa)). Polar residues predominate over residues 16-27 (EVSCDSSGDSNS). Over residues 51–66 (SSSCSSSGDSGGLPRR) the composition is skewed to low complexity. Residues 118–138 (YALFYVGFACLLWSIYFAVHM) traverse the membrane as a helical segment. At 139–141 (KSK) the chain is on the extracellular side. The chain crosses the membrane as a helical span at residues 142-162 (VIVMVVPALCFLVVCVGFFLF). The Cytoplasmic portion of the chain corresponds to 163 to 171 (TFTKLYARH). Residues 172-192 (YAWTSLALTLLVFALTLAAQF) traverse the membrane as a helical segment. Residues 193–215 (QVWTPLSGRVDSSNHTLTATPAD) are Extracellular-facing. N-linked (GlcNAc...) asparagine glycosylation occurs at Asn-206. The chain crosses the membrane as a helical span at residues 216–235 (TCLSQVGSFSICIEVLLLLY). Residues 236–241 (TVMQLP) lie on the Cytoplasmic side of the membrane. Residues 242-259 (LYLSLFLGVVYSVLFETF) traverse the membrane as a helical segment. Residues 260-280 (GYHFRNEDCYPSPGPGALHWE) are Extracellular-facing. Residues 281–301 (LLSRALLHVCIHAIGIHLFVM) form a helical membrane-spanning segment. Residues 302 to 786 (SQVRSRSTFL…VKTFASATFS (485 aa)) are Cytoplasmic-facing. Positions 349 to 375 (QGDEESENSVKRHATSSPKNRKKKSSI) are disordered. Over residues 359–374 (KRHATSSPKNRKKKSS) the composition is skewed to basic residues. Positions 399, 400, and 443 each coordinate Mg(2+). Residues 399-404 (DIVGFT), 441-443 (LGD), and Arg-487 contribute to the ATP site. 2 disordered regions span residues 596 to 615 (DSRESSGPRGQGTASPGSVS) and 641 to 685 (SEAG…EEKL). Phosphoserine is present on residues Ser-610 and Ser-613. Polar residues predominate over residues 661 to 676 (STKASGGPNSKTQNGL). A phosphoserine mark is found at Ser-688, Ser-691, and Ser-706. A helical transmembrane segment spans residues 787-807 (SLLDVFLSTTVFLILSITCFL). Residues 808–818 (KYGATATPPPP) lie on the Extracellular side of the membrane. A helical transmembrane segment spans residues 819–839 (AALAVFGADLLLEVLSLIVSI). At 840–867 (RMVFFLEDVMTCTKWLLEWIAGWLPRHC) the chain is on the cytoplasmic side. A helical transmembrane segment spans residues 868-888 (IGAILVSLPALAVYSHITSEF). Topologically, residues 889–891 (ETN) are extracellular. Residues 892 to 912 (IHVTMFTGSAVLVAVVHYCNF) form a helical membrane-spanning segment. Residues 913–920 (CQLSSWMR) are Cytoplasmic-facing. Residues 921-941 (SSLATIVGAGLLLLLHISLCQ) form a helical membrane-spanning segment. Topologically, residues 942-975 (DSSIVMSPLDSAQNFSAQRNPCNSSVLQDGRRPA) are extracellular. Asn-955 and Asn-964 each carry an N-linked (GlcNAc...) asparagine glycan. Residues 976-996 (SLIGKELILTFFLLLLLVWFL) traverse the membrane as a helical segment. Topologically, residues 997 to 1353 (NREFEVSYRL…LSKLNVSKSV (357 aa)) are cytoplasmic. ATP-binding positions include Lys-1108, 1185–1187 (DIW), 1192–1196 (NIASR), and Lys-1232. A phosphoserine mark is found at Ser-1257, Ser-1259, Ser-1295, Ser-1307, and Ser-1332. The tract at residues 1290 to 1314 (KASLGSDDSTQAKEARLSSKRSWRE) is disordered. Positions 1299-1314 (TQAKEARLSSKRSWRE) are enriched in basic and acidic residues.

It belongs to the adenylyl cyclase class-4/guanylyl cyclase family. Requires Mg(2+) as cofactor. The cofactor is Mn(2+). As to expression, detected in brain, spleen, lung, liver and testis (at protein level). Detected in brain, especially in hippocampus, cerebellum and neocortex. Found in decreasing order in skeletal muscle, heart, adrenal gland, ovary and brain; and to a lesser extent, in kidney, liver, testis, lung, thymus and spleen.

The protein localises to the cell membrane. The catalysed reaction is ATP = 3',5'-cyclic AMP + diphosphate. Insensitive to calcium/calmodulin, forskolin and somatostatin. Stimulated by beta-adrenergic receptor activation. Activity is down-regulated by calcium/calcineurin. In terms of biological role, adenylyl cyclase that catalyzes the formation of the signaling molecule cAMP in response to activation of G protein-coupled receptors. Contributes to signaling cascades activated by CRH (corticotropin-releasing factor), corticosteroids and by beta-adrenergic receptors. The protein is Adenylate cyclase type 9 (Adcy9) of Mus musculus (Mouse).